Reading from the N-terminus, the 90-residue chain is Evasin P1128 (90 aa).

Positions 1 to 18 (MFIALGIQLFVAVTYAAG) are cleaved as a signal peptide. Disulfide bonds link Cys-29–Cys-51, Cys-33–Cys-53, and Cys-44–Cys-64. The N-linked (GlcNAc...) asparagine glycan is linked to Asn-32.

Its subcellular location is the secreted. Salivary chemokine-binding protein which binds to host chemokines CXCL1, CXCL2, CXCL3, CXCL5 and CXCL8. The protein is Evasin P1128 of Ixodes ricinus (Common tick).